Reading from the N-terminus, the 327-residue chain is Porphobilinogen deaminase (327 aa).

An S-(dipyrrolylmethanemethyl)cysteine modification is found at cysteine 250.

The protein belongs to the HMBS family. As to quaternary structure, monomer. Dipyrromethane serves as cofactor.

It catalyses the reaction 4 porphobilinogen + H2O = hydroxymethylbilane + 4 NH4(+). The protein operates within porphyrin-containing compound metabolism; protoporphyrin-IX biosynthesis; coproporphyrinogen-III from 5-aminolevulinate: step 2/4. Its function is as follows. Tetrapolymerization of the monopyrrole PBG into the hydroxymethylbilane pre-uroporphyrinogen in several discrete steps. This Paraburkholderia phymatum (strain DSM 17167 / CIP 108236 / LMG 21445 / STM815) (Burkholderia phymatum) protein is Porphobilinogen deaminase.